The sequence spans 37 residues: Large ribosomal subunit protein bL36c (37 aa).

It belongs to the bacterial ribosomal protein bL36 family.

Its subcellular location is the plastid. The protein resides in the chloroplast. The protein is Large ribosomal subunit protein bL36c (rpl36) of Pisum sativum (Garden pea).